The sequence spans 233 residues: 3-dehydroquinate dehydratase (233 aa).

3-dehydroquinate contacts are provided by residues 34 to 36 (ELR) and arginine 64. Histidine 118 acts as the Proton donor/acceptor in catalysis. Lysine 145 serves as the catalytic Schiff-base intermediate with substrate. 3 residues coordinate 3-dehydroquinate: arginine 185, serine 205, and glutamine 209.

The protein belongs to the type-I 3-dehydroquinase family. Homodimer.

The catalysed reaction is 3-dehydroquinate = 3-dehydroshikimate + H2O. It functions in the pathway metabolic intermediate biosynthesis; chorismate biosynthesis; chorismate from D-erythrose 4-phosphate and phosphoenolpyruvate: step 3/7. In terms of biological role, involved in the third step of the chorismate pathway, which leads to the biosynthesis of aromatic amino acids. Catalyzes the cis-dehydration of 3-dehydroquinate (DHQ) and introduces the first double bond of the aromatic ring to yield 3-dehydroshikimate. In Coxiella burnetii (strain CbuK_Q154) (Coxiella burnetii (strain Q154)), this protein is 3-dehydroquinate dehydratase.